The primary structure comprises 170 residues: MLPEPININKWIEENGHLLQPPVNNYCLHRGGFTIMIVGGPNERTDYHINETPEHFHQLKGAMCLKVVDDGEFRDIIINEGDSFLLPGNTPHNPVRFADTIGLVVEQDRPETALDRLRWYCSNCREIVHEAAFHLTDLGTQIKEAILAFDGDKESRTCKKCGTLNYSKPQ.

R44 is a binding site for O2. Fe cation contacts are provided by H48, E54, and H92. Residue E54 participates in substrate binding. R96 and E106 together coordinate substrate. A divalent metal cation is bound by residues C121, C124, C158, and C161.

Belongs to the 3-HAO family. Requires Fe(2+) as cofactor.

Its subcellular location is the cytoplasm. It catalyses the reaction 3-hydroxyanthranilate + O2 = (2Z,4Z)-2-amino-3-carboxymuconate 6-semialdehyde. It participates in cofactor biosynthesis; NAD(+) biosynthesis; quinolinate from L-kynurenine: step 3/3. In terms of biological role, catalyzes the oxidative ring opening of 3-hydroxyanthranilate to 2-amino-3-carboxymuconate semialdehyde, which spontaneously cyclizes to quinolinate. This Scheffersomyces stipitis (strain ATCC 58785 / CBS 6054 / NBRC 10063 / NRRL Y-11545) (Yeast) protein is 3-hydroxyanthranilate 3,4-dioxygenase.